The primary structure comprises 765 residues: Membrane metallo-endopeptidase-like 1 (765 aa).

Over 1-19 the chain is Cytoplasmic; the sequence is MVERAGWCRKKSPGFVEYG. A helical; Signal-anchor for type II membrane protein membrane pass occupies residues 20–40; the sequence is LMVLLLLLLGAIVTLGVFYSI. Residues 41–765 are Lumenal-facing; the sequence is GKQLPLLTSL…MHPMKRCRIW (725 aa). One can recognise a Peptidase M13 domain in the interval 74–765; it reads ICTTPSCVIA…MHPMKRCRIW (692 aa). Cystine bridges form between C75-C80, C98-C750, C106-C710, C161-C425, and C636-C762. R121 is an a peptide binding site. N163, N279, N303, and N336 each carry an N-linked (GlcNAc...) asparagine glycan. The stretch at 523–549 forms a coiled coil; the sequence is FENGLQNLKNNAQRSLKKLREKVDQNL. H599 is a Zn(2+) binding site. Residue E600 is part of the active site. Zn(2+) contacts are provided by H603 and E662. Residue D666 is the Proton donor of the active site. N694 carries N-linked (GlcNAc...) asparagine glycosylation.

Belongs to the peptidase M13 family. It depends on Zn(2+) as a cofactor. N-glycosylated. In terms of tissue distribution, highly expressed in testis. Also expressed in ovary. Weakly or not expressed in brain, lung, heart, liver, kidney, adrenal gland and intestine.

Its subcellular location is the membrane. It is found in the secreted. The enzyme catalyses Preferential cleavage of polypeptides between hydrophobic residues, particularly with Phe or Tyr at P1'.. With respect to regulation, inhibited by thiorphan and phosphoramidon. In terms of biological role, metalloprotease involved in sperm function, possibly by modulating the processes of fertilization and early embryonic development. Degrades a broad variety of small peptides with a preference for peptides shorter than 3 kDa containing neutral bulky aliphatic or aromatic amino acid residues. Shares the same substrate specificity with MME and cleaves peptides at the same amide bond. The protein is Membrane metallo-endopeptidase-like 1 (Mmel1) of Mus musculus (Mouse).